A 149-amino-acid chain; its full sequence is Arginine repressor (149 aa).

The protein belongs to the ArgR family.

The protein resides in the cytoplasm. Its pathway is amino-acid biosynthesis; L-arginine biosynthesis [regulation]. Functionally, regulates arginine biosynthesis genes. The chain is Arginine repressor from Halalkalibacterium halodurans (strain ATCC BAA-125 / DSM 18197 / FERM 7344 / JCM 9153 / C-125) (Bacillus halodurans).